A 201-amino-acid polypeptide reads, in one-letter code: Large ribosomal subunit protein uL4 (201 aa).

A disordered region spans residues 44–68 (KAQKTRSEVAGTTKKSKKQKGGGAR).

It belongs to the universal ribosomal protein uL4 family. Part of the 50S ribosomal subunit.

Functionally, one of the primary rRNA binding proteins, this protein initially binds near the 5'-end of the 23S rRNA. It is important during the early stages of 50S assembly. It makes multiple contacts with different domains of the 23S rRNA in the assembled 50S subunit and ribosome. Its function is as follows. Forms part of the polypeptide exit tunnel. The sequence is that of Large ribosomal subunit protein uL4 from Xanthomonas oryzae pv. oryzae (strain MAFF 311018).